A 304-amino-acid polypeptide reads, in one-letter code: Aspartate carbamoyltransferase catalytic subunit (304 aa).

Carbamoyl phosphate-binding residues include Arg55 and Thr56. Position 84 (Lys84) interacts with L-aspartate. Carbamoyl phosphate is bound by residues Arg105, His133, and Gln136. The L-aspartate site is built by Arg165 and Arg226. The carbamoyl phosphate site is built by Leu265 and Pro266.

This sequence belongs to the aspartate/ornithine carbamoyltransferase superfamily. ATCase family. As to quaternary structure, heterooligomer of catalytic and regulatory chains.

The catalysed reaction is carbamoyl phosphate + L-aspartate = N-carbamoyl-L-aspartate + phosphate + H(+). It participates in pyrimidine metabolism; UMP biosynthesis via de novo pathway; (S)-dihydroorotate from bicarbonate: step 2/3. Its function is as follows. Catalyzes the condensation of carbamoyl phosphate and aspartate to form carbamoyl aspartate and inorganic phosphate, the committed step in the de novo pyrimidine nucleotide biosynthesis pathway. The sequence is that of Aspartate carbamoyltransferase catalytic subunit from Methanothrix thermoacetophila (strain DSM 6194 / JCM 14653 / NBRC 101360 / PT) (Methanosaeta thermophila).